The chain runs to 421 residues: MAKAKVKKDQSPCSGSLGKTANTPKQKRKQKQRKFWQNHPKITTKTGETKKVSLLLPPKGPQEFSSNWKALQELLKPKENQALPATTLAKCPKKDQKVSEKKTEESVPQKSGHKINGGITSVSAIAKGAKAPSQATPTKAAEKSDEVSKGKKRKIMAEATDTEHQGKKPQGEAQPQPPKVDIWFDDVDPDDIEAALGPEAGRVAREMQGITDTRSPTVDKILVKERAFEGLTRTVAMDCEMVGVGMDGEESILARVSIVNLFGKCVYDKYVKPTERVTDYRTAVSGIRPEDVKKGEPFKVVQKEVSEILRGRTLVGHAVHNDLKILFLDHPKKAIRDTQKYKPFKQKVKSGRPSLKLLCEKILNVKVQTGEHCSVQDAQAAMRLYTMEKKSWEVAIKAKYTGVMPVDRKSKGPQKDKQCPQ.

Disordered stretches follow at residues 1 to 51 and 79 to 179; these read MAKA…ETKK and ENQA…QPPK. Polar residues predominate over residues 11–24; that stretch reads SPCSGSLGKTANTP. Residues 25–36 show a composition bias toward basic residues; sequence KQKRKQKQRKFW. 3 stretches are compositionally biased toward basic and acidic residues: residues 92–107, 140–149, and 161–170; these read PKKD…EESV, AAEKSDEVSK, and DTEHQGKKPQ. Residues 234–385 enclose the Exonuclease domain; sequence TVAMDCEMVG…QDAQAAMRLY (152 aa).

It belongs to the REXO4 family.

It is found in the nucleus. This is RNA exonuclease 4 (rexo4) from Xenopus laevis (African clawed frog).